Here is a 448-residue protein sequence, read N- to C-terminus: Putative RNA-ligase (448 aa).

It belongs to the asfivirus M448R family.

The protein resides in the virion. The chain is Putative RNA-ligase from African swine fever virus (isolate Pig/Kenya/KEN-50/1950) (ASFV).